A 1348-amino-acid polypeptide reads, in one-letter code: Putative late blight resistance protein homolog R1B-12 (1348 aa).

Coiled coils occupy residues 446 to 469 (RYSD…ESLQ) and 561 to 583 (PRMN…KLLN). Residues 552-848 (RTSSQLTRTP…ISESFIKSCE (297 aa)) enclose the NB-ARC domain. Residue 595 to 602 (GMPGLGKT) participates in ATP binding. LRR repeat units follow at residues 977–1001 (FKFL…LLYL), 1051–1074 (LRHL…SAKL), 1123–1147 (PITL…ISAQ), 1151–1170 (YLKL…TADH), 1171–1194 (LKHL…EVSN), 1197–1219 (FPQL…ADDA), 1220–1244 (FPNL…FMDI), and 1309–1332 (LPGI…DMDA). Residues 1284–1348 (VKKMVLKFDT…VGKLINRGML (65 aa)) enclose the HMA domain.

It belongs to the disease resistance NB-LRR family.

The protein resides in the cytoplasm. The protein localises to the membrane. Its function is as follows. Confers resistance to late blight (Phytophthora infestans) races carrying the avirulence gene Avr1. Resistance proteins guard the plant against pathogens that contain an appropriate avirulence protein via an indirect interaction with this avirulence protein. That triggers a defense system including the hypersensitive response, which restricts the pathogen growth. The chain is Putative late blight resistance protein homolog R1B-12 (R1B-12) from Solanum demissum (Wild potato).